Consider the following 314-residue polypeptide: tRNA pseudouridine synthase B (314 aa).

The active-site Nucleophile is the Asp47.

It belongs to the pseudouridine synthase TruB family. Type 1 subfamily.

It catalyses the reaction uridine(55) in tRNA = pseudouridine(55) in tRNA. Functionally, responsible for synthesis of pseudouridine from uracil-55 in the psi GC loop of transfer RNAs. The sequence is that of tRNA pseudouridine synthase B from Vibrio parahaemolyticus serotype O3:K6 (strain RIMD 2210633).